Reading from the N-terminus, the 546-residue chain is Chaperonin GroEL 1 (546 aa).

Residues 30-33 (TLGP), K51, 87-91 (DGTTT), G415, and D495 each bind ATP. The segment at 527–546 (DAAPTAAPGGPGAGGPGFDF) is disordered. Residues 535–546 (GGPGAGGPGFDF) show a composition bias toward gly residues.

This sequence belongs to the chaperonin (HSP60) family. Forms a cylinder of 14 subunits composed of two heptameric rings stacked back-to-back. Interacts with the co-chaperonin GroES.

It is found in the cytoplasm. The enzyme catalyses ATP + H2O + a folded polypeptide = ADP + phosphate + an unfolded polypeptide.. In terms of biological role, together with its co-chaperonin GroES, plays an essential role in assisting protein folding. The GroEL-GroES system forms a nano-cage that allows encapsulation of the non-native substrate proteins and provides a physical environment optimized to promote and accelerate protein folding. The sequence is that of Chaperonin GroEL 1 from Burkholderia lata (strain ATCC 17760 / DSM 23089 / LMG 22485 / NCIMB 9086 / R18194 / 383).